We begin with the raw amino-acid sequence, 149 residues long: Myoglobin (149 aa).

Position 2 is an N-acetylalanine (alanine 2). One can recognise a Globin domain in the interval alanine 2–lysine 143. Histidine 89 provides a ligand contact to heme b.

This sequence belongs to the globin family. Monomeric.

It localises to the cytoplasm. The protein localises to the sarcoplasm. It catalyses the reaction Fe(III)-heme b-[protein] + nitric oxide + H2O = Fe(II)-heme b-[protein] + nitrite + 2 H(+). It carries out the reaction H2O2 + AH2 = A + 2 H2O. Its function is as follows. Monomeric heme protein which primary function is to store oxygen and facilitate its diffusion within muscle tissues. Reversibly binds oxygen through a pentacoordinated heme iron and enables its timely and efficient release as needed during periods of heightened demand. Depending on the oxidative conditions of tissues and cells, and in addition to its ability to bind oxygen, it also has a nitrite reductase activity whereby it regulates the production of bioactive nitric oxide. Under stress conditions, like hypoxia and anoxia, it also protects cells against reactive oxygen species thanks to its pseudoperoxidase activity. The sequence is that of Myoglobin (mb) from Galeorhinus galeus (Tope shark).